A 337-amino-acid polypeptide reads, in one-letter code: Protein BIG GRAIN 1-like (337 aa).

Disordered stretches follow at residues M1–S32, S120–S163, and K179–S235. Positions H137–A146 are enriched in basic and acidic residues. Composition is skewed to low complexity over residues P150–S163 and P195–A209.

The protein belongs to the BIG GRAIN 1 (BG1) plant protein family.

Its subcellular location is the cell membrane. Involved in auxin transport. Regulator of the auxin signaling pathway. This Oryza sativa subsp. japonica (Rice) protein is Protein BIG GRAIN 1-like.